Consider the following 304-residue polypeptide: Recombination-associated protein RdgC (304 aa).

Belongs to the RdgC family.

It localises to the cytoplasm. It is found in the nucleoid. Its function is as follows. May be involved in recombination. This is Recombination-associated protein RdgC from Paraburkholderia phymatum (strain DSM 17167 / CIP 108236 / LMG 21445 / STM815) (Burkholderia phymatum).